Reading from the N-terminus, the 152-residue chain is Protein-export protein SecB (152 aa).

It belongs to the SecB family. Homotetramer, a dimer of dimers. One homotetramer interacts with 1 SecA dimer.

It is found in the cytoplasm. Its function is as follows. One of the proteins required for the normal export of preproteins out of the cell cytoplasm. It is a molecular chaperone that binds to a subset of precursor proteins, maintaining them in a translocation-competent state. It also specifically binds to its receptor SecA. This is Protein-export protein SecB from Acinetobacter baumannii (strain AB307-0294).